Consider the following 262-residue polypeptide: MKPLKILISNDDGVFAEGIRTLATSAASRGHKVTVVCPDQERSATGHGLTLHSPIRAEKADELFGGGIKAWGCTGTPADCVKLALNELLDQKPDLILSGINHGPNLGTDIFCSGTVAAALEGTLDGIPSIAVSVASFQWKNFSFAGKLSLDIAEKAIQQNWPKNLLLNLNIPPCEEKEMGDLVWTRLSIRQYEEQFIRRVDPRGNTYFWMAGEAVTDLQSAGEGPKGWPSDVSQIAICSPSLTPIQPDLFWRGNLDDLPNLI.

A divalent metal cation-binding residues include Asp-11, Asp-12, Ser-43, and Asn-101.

It belongs to the SurE nucleotidase family. Requires a divalent metal cation as cofactor.

It is found in the cytoplasm. The catalysed reaction is a ribonucleoside 5'-phosphate + H2O = a ribonucleoside + phosphate. Nucleotidase that shows phosphatase activity on nucleoside 5'-monophosphates. In Prochlorococcus marinus (strain NATL1A), this protein is 5'-nucleotidase SurE.